The following is a 376-amino-acid chain: Homoserine dehydrogenase (376 aa).

Residues Asn17 and Ile18 each coordinate NADP(+). Ile18 is a binding site for NAD(+). NADPH is bound by residues Ile18, Lys67, Thr99, and Lys123. The NADP(+) site is built by Thr99 and Lys123. Thr99 serves as a coordination point for NAD(+). Na(+) contacts are provided by Glu150, Val153, Ala155, and Leu157. Ser201 is modified (phosphoserine). 2 residues coordinate NADP(+): Gly213 and Glu216. Glu216 and Asp227 together coordinate L-homoserine. The Proton donor role is filled by Lys231. Position 349 (Gly349) interacts with NADP(+). Gly349 serves as a coordination point for NAD(+). Gly349 is an NADPH binding site.

The protein belongs to the homoserine dehydrogenase family. A metal cation serves as cofactor.

The enzyme catalyses L-homoserine + NADP(+) = L-aspartate 4-semialdehyde + NADPH + H(+). It carries out the reaction L-homoserine + NAD(+) = L-aspartate 4-semialdehyde + NADH + H(+). It functions in the pathway amino-acid biosynthesis; L-methionine biosynthesis via de novo pathway; L-homoserine from L-aspartate: step 3/3. Its pathway is amino-acid biosynthesis; L-threonine biosynthesis; L-threonine from L-aspartate: step 3/5. In terms of biological role, catalyzes the conversion of L-aspartate-beta-semialdehyde (L-Asa) to L-homoserine (L-Hse), the third step in the biosynthesis of amino acids that derive from aspartate (the aspartate family of amino acids), including methioinine and threonine, the latter of which is a precursor to isoleucine; production of homoserine leads to a branch-point in the pathway as it can either be O-phosphorylated for processing to threonine, or O-acylated for processing to methionine. This Schizosaccharomyces pombe (strain 972 / ATCC 24843) (Fission yeast) protein is Homoserine dehydrogenase.